We begin with the raw amino-acid sequence, 149 residues long: UPF0178 protein Pmen_0294 (149 aa).

It belongs to the UPF0178 family.

This is UPF0178 protein Pmen_0294 from Ectopseudomonas mendocina (strain ymp) (Pseudomonas mendocina).